We begin with the raw amino-acid sequence, 510 residues long: UDP-N-acetylmuramoylalanine--D-glutamate ligase (510 aa).

138-144 lines the ATP pocket; it reads GTNGKTT. Positions 294 to 316 are disordered; sequence FDEPAPAPRRKKDAPPPTRAGGR.

It belongs to the MurCDEF family.

Its subcellular location is the cytoplasm. It carries out the reaction UDP-N-acetyl-alpha-D-muramoyl-L-alanine + D-glutamate + ATP = UDP-N-acetyl-alpha-D-muramoyl-L-alanyl-D-glutamate + ADP + phosphate + H(+). It functions in the pathway cell wall biogenesis; peptidoglycan biosynthesis. In terms of biological role, cell wall formation. Catalyzes the addition of glutamate to the nucleotide precursor UDP-N-acetylmuramoyl-L-alanine (UMA). The protein is UDP-N-acetylmuramoylalanine--D-glutamate ligase of Bordetella pertussis (strain Tohama I / ATCC BAA-589 / NCTC 13251).